Reading from the N-terminus, the 129-residue chain is Large ribosomal subunit protein bL21 (129 aa).

Positions 100–129 (DGAKPSKKAAEKKAPKAAPKKAAAKAESAE) are disordered.

Belongs to the bacterial ribosomal protein bL21 family. Part of the 50S ribosomal subunit. Contacts protein L20.

Functionally, this protein binds to 23S rRNA in the presence of protein L20. This chain is Large ribosomal subunit protein bL21, found in Brucella anthropi (strain ATCC 49188 / DSM 6882 / CCUG 24695 / JCM 21032 / LMG 3331 / NBRC 15819 / NCTC 12168 / Alc 37) (Ochrobactrum anthropi).